The sequence spans 654 residues: Acetyl-coenzyme A synthetase (654 aa).

Residues 190 to 193 (RGGK) and Thr-313 contribute to the CoA site. Residues 389-391 (GEP), 413-418 (DTWWQT), Asp-504, and Arg-519 each bind ATP. Ser-527 contributes to the CoA binding site. An ATP-binding site is contributed by Arg-530. The Mg(2+) site is built by Val-541 and Val-546. At Lys-613 the chain carries N6-acetyllysine.

Belongs to the ATP-dependent AMP-binding enzyme family. Requires Mg(2+) as cofactor. Acetylated. Deacetylation by the SIR2-homolog deacetylase activates the enzyme.

It catalyses the reaction acetate + ATP + CoA = acetyl-CoA + AMP + diphosphate. Its function is as follows. Catalyzes the conversion of acetate into acetyl-CoA (AcCoA), an essential intermediate at the junction of anabolic and catabolic pathways. AcsA undergoes a two-step reaction. In the first half reaction, AcsA combines acetate with ATP to form acetyl-adenylate (AcAMP) intermediate. In the second half reaction, it can then transfer the acetyl group from AcAMP to the sulfhydryl group of CoA, forming the product AcCoA. The protein is Acetyl-coenzyme A synthetase of Leptospira borgpetersenii serovar Hardjo-bovis (strain JB197).